The primary structure comprises 350 residues: MRRRISAIIMTLFMVLVSCNSGGVAEDPKTVYLTSIANLGKGFLDVFVTFGDMVAGAFGIRADTKKSDIGKYFNDIEKTMTTVKKRLQDEVAKNGNYVKVKEVVDKFVADVLDKIAAGAKEAAKGATGDDKIRKCYFCWAWSQSADKDSVISLVKGIKTIVDAVLKDKGDAGATKTGEDKKDIGNLFINDAGKDGSKRENIAKAAASIGSVTGADILQAIIKSKENPNADSVNGIEKATDAAEIAIVPAVNKTEIKEDTAKKDAVIAAGIALRAMAKDGKFAAKNEEKSANAVNGAAASAVGKTLSTLIIAIRNTVDSGLKTINEALATVKQEDKSAEATNPAEATTSGQ.

An N-terminal signal peptide occupies residues 1 to 18 (MRRRISAIIMTLFMVLVS). A lipid anchor (N-palmitoyl cysteine) is attached at Cys19. The S-diacylglycerol cysteine moiety is linked to residue Cys19.

This sequence belongs to the variable large protein (Vlp) family. Delta subfamily.

The protein resides in the cell outer membrane. The Vlp and Vsp proteins are antigenically distinct proteins, only one vlp or vsp gene is transcriptionally active at any one time. Switching between these genes is a mechanism of host immune response evasion. The polypeptide is Variable large protein 4 (Borrelia hermsii).